The following is a 183-amino-acid chain: Translocon-associated protein subunit beta (183 aa).

An N-terminal signal peptide occupies residues 1–17 (MRLLAFAVLALFAVTQA). The Lumenal segment spans residues 18–146 (EEGARLLASK…REFDRRFSPH (129 aa)). Asn88 carries an N-linked (GlcNAc...) asparagine glycan. Residues 147–167 (FLDWAAFGVMTLPSIGVPLLL) traverse the membrane as a helical segment. Topologically, residues 168–183 (WYSSKRKYDTPKTKKN) are cytoplasmic.

The protein belongs to the TRAP-beta family. As to quaternary structure, heterotetramer of TRAP-alpha, TRAP-beta, TRAP-delta and TRAP-gamma. Interacts with STING1.

The protein resides in the endoplasmic reticulum membrane. Functionally, TRAP proteins are part of a complex whose function is to bind calcium to the ER membrane and thereby regulate the retention of ER resident proteins. The protein is Translocon-associated protein subunit beta (SSR2) of Bos taurus (Bovine).